We begin with the raw amino-acid sequence, 673 residues long: uncharacterized protein (673 aa).

The interval 1–95 (MLNGEKSALG…QSSAIADSIG (95 aa)) is disordered. A compositionally biased stretch (low complexity) spans 13–40 (PSNSNSSSKLNAKSPNFIPSSSNIPRSS). A compositionally biased stretch (basic and acidic residues) spans 42–60 (KTKEHSADRKPHRNSEKKT). The RING-type zinc finger occupies 214-273 (CPFCLEEKPVAARMSRCGHVYCFSCLLRFVETPTAAEVKAAETSGTKIVKCGHRSCPICW). The interval 649–673 (SAPSKNSKNKKKKKLVLLSTGAAHR) is disordered.

It is found in the cytoplasm. It localises to the nucleus. This is an uncharacterized protein from Schizosaccharomyces pombe (strain 972 / ATCC 24843) (Fission yeast).